Here is a 185-residue protein sequence, read N- to C-terminus: Ribosome-recycling factor (185 aa).

The disordered stretch occupies residues 141–161 (KQEKDKKISEDDLKRAEKEVQ).

The protein belongs to the RRF family.

Its subcellular location is the cytoplasm. Functionally, responsible for the release of ribosomes from messenger RNA at the termination of protein biosynthesis. May increase the efficiency of translation by recycling ribosomes from one round of translation to another. The polypeptide is Ribosome-recycling factor (Geotalea uraniireducens (strain Rf4) (Geobacter uraniireducens)).